The primary structure comprises 560 residues: 2-succinyl-5-enolpyruvyl-6-hydroxy-3-cyclohexene-1-carboxylate synthase (560 aa).

Belongs to the TPP enzyme family. MenD subfamily. Homodimer. Mg(2+) is required as a cofactor. It depends on Mn(2+) as a cofactor. The cofactor is thiamine diphosphate.

The enzyme catalyses isochorismate + 2-oxoglutarate + H(+) = 5-enolpyruvoyl-6-hydroxy-2-succinyl-cyclohex-3-ene-1-carboxylate + CO2. It participates in quinol/quinone metabolism; 1,4-dihydroxy-2-naphthoate biosynthesis; 1,4-dihydroxy-2-naphthoate from chorismate: step 2/7. The protein operates within quinol/quinone metabolism; menaquinone biosynthesis. Functionally, catalyzes the thiamine diphosphate-dependent decarboxylation of 2-oxoglutarate and the subsequent addition of the resulting succinic semialdehyde-thiamine pyrophosphate anion to isochorismate to yield 2-succinyl-5-enolpyruvyl-6-hydroxy-3-cyclohexene-1-carboxylate (SEPHCHC). The polypeptide is 2-succinyl-5-enolpyruvyl-6-hydroxy-3-cyclohexene-1-carboxylate synthase (Staphylococcus saprophyticus subsp. saprophyticus (strain ATCC 15305 / DSM 20229 / NCIMB 8711 / NCTC 7292 / S-41)).